The following is a 188-amino-acid chain: Putative manganese efflux pump MntP (188 aa).

6 consecutive transmembrane segments (helical) span residues 2-22, 39-59, 67-87, 107-127, 129-149, and 166-186; these read IMGN…AFAV, LITG…GFLL, ITAI…LNMI, IILS…FAFL, VDIV…SFLG, and LAGG…HLGF.

It belongs to the MntP (TC 9.B.29) family.

The protein localises to the cell membrane. Its function is as follows. Probably functions as a manganese efflux pump. In Desulfitobacterium hafniense (strain Y51), this protein is Putative manganese efflux pump MntP.